We begin with the raw amino-acid sequence, 192 residues long: MMRYYIYVQYWKRFLRLVRSFHWATSNVLLFKSDFGDTFKMRDYNLYEMLSARNGSGGTYFHEACQANSIALLWRAAGMLDESHPRILNIRDYKGAQCTHIIATSNVSCSIDMMNIVLQLGADINGQEGLAGLTPLHICVNKKNYALAEWLCQAPGIDVKVENFGKETPYDLACKMEDRKMMKIFEERSKKM.

3 ANK repeats span residues 94-126, 131-161, and 165-192; these read KGAQ…DING, AGLT…DVKV, and GKET…SKKM.

The protein belongs to the polydnaviridae I-Kappa-B-like protein family.

Its function is as follows. Suppresses the host immune response through NF-kappa-B inactivation. Possesses ankyrin repeat domains required for NF-kappa-B binding but lacks the regulatory regions required for dissociation from NF-kappa-B and degradation. Therefore, prevents host NF-kappa-B release and subsequent activation. The sequence is that of I-Kappa-B like protein H1 (H4) from Microplitis demolitor bracovirus (isolate Webb) (MdBV).